Consider the following 483-residue polypeptide: Glutamyl-tRNA(Gln) amidotransferase subunit A (483 aa).

Active-site charge relay system residues include lysine 75 and serine 150. Serine 174 functions as the Acyl-ester intermediate in the catalytic mechanism.

The protein belongs to the amidase family. GatA subfamily. In terms of assembly, heterotrimer of A, B and C subunits.

The enzyme catalyses L-glutamyl-tRNA(Gln) + L-glutamine + ATP + H2O = L-glutaminyl-tRNA(Gln) + L-glutamate + ADP + phosphate + H(+). Functionally, allows the formation of correctly charged Gln-tRNA(Gln) through the transamidation of misacylated Glu-tRNA(Gln) in organisms which lack glutaminyl-tRNA synthetase. The reaction takes place in the presence of glutamine and ATP through an activated gamma-phospho-Glu-tRNA(Gln). The chain is Glutamyl-tRNA(Gln) amidotransferase subunit A from Legionella pneumophila (strain Paris).